The primary structure comprises 271 residues: 4-diphosphocytidyl-2-C-methyl-D-erythritol kinase (271 aa).

The active site involves K17. An ATP-binding site is contributed by P97–S107. The active site involves D137.

This sequence belongs to the GHMP kinase family. IspE subfamily.

The enzyme catalyses 4-CDP-2-C-methyl-D-erythritol + ATP = 4-CDP-2-C-methyl-D-erythritol 2-phosphate + ADP + H(+). The protein operates within isoprenoid biosynthesis; isopentenyl diphosphate biosynthesis via DXP pathway; isopentenyl diphosphate from 1-deoxy-D-xylulose 5-phosphate: step 3/6. Functionally, catalyzes the phosphorylation of the position 2 hydroxy group of 4-diphosphocytidyl-2C-methyl-D-erythritol. This chain is 4-diphosphocytidyl-2-C-methyl-D-erythritol kinase, found in Thermotoga maritima (strain ATCC 43589 / DSM 3109 / JCM 10099 / NBRC 100826 / MSB8).